The following is a 240-amino-acid chain: Ribonuclease HII (240 aa).

The 192-residue stretch at 31 to 222 (RLIAGVDEAG…VRRALGLETA (192 aa)) folds into the RNase H type-2 domain. A divalent metal cation-binding residues include Asp-37, Glu-38, and Asp-130.

The protein belongs to the RNase HII family. Requires Mn(2+) as cofactor. Mg(2+) is required as a cofactor.

The protein resides in the cytoplasm. It catalyses the reaction Endonucleolytic cleavage to 5'-phosphomonoester.. Endonuclease that specifically degrades the RNA of RNA-DNA hybrids. In Xanthomonas campestris pv. campestris (strain B100), this protein is Ribonuclease HII.